Here is a 456-residue protein sequence, read N- to C-terminus: Exodeoxyribonuclease 7 large subunit (456 aa).

The protein belongs to the XseA family. In terms of assembly, heterooligomer composed of large and small subunits.

It is found in the cytoplasm. It carries out the reaction Exonucleolytic cleavage in either 5'- to 3'- or 3'- to 5'-direction to yield nucleoside 5'-phosphates.. Bidirectionally degrades single-stranded DNA into large acid-insoluble oligonucleotides, which are then degraded further into small acid-soluble oligonucleotides. This is Exodeoxyribonuclease 7 large subunit from Lactobacillus johnsonii (strain CNCM I-12250 / La1 / NCC 533).